The following is a 299-amino-acid chain: Probable lipid kinase YegS (299 aa).

A DAGKc domain is found at 2–133 (ANFPDSLLIL…IDMARVNDKT (132 aa)). ATP-binding positions include Thr-40, 66-72 (GDGTINE), and Thr-95. The Mg(2+) site is built by Leu-215, Asp-218, and Leu-220. Glu-271 (proton acceptor) is an active-site residue.

It belongs to the diacylglycerol/lipid kinase family. YegS lipid kinase subfamily. Mg(2+) serves as cofactor. Requires Ca(2+) as cofactor.

It localises to the cytoplasm. Probably phosphorylates lipids; the in vivo substrate is unknown. This Salmonella arizonae (strain ATCC BAA-731 / CDC346-86 / RSK2980) protein is Probable lipid kinase YegS.